The sequence spans 468 residues: Beta-monoglucosyldiacylglycerol synthase (468 aa).

The next 4 helical transmembrane spans lie at 51 to 71, 72 to 92, 361 to 381, and 387 to 407; these read AALV…VSWG, SIFI…VVFA, FMLT…MAVV, and MLGP…FAGL.

The protein belongs to the glycosyltransferase 2 family. The cofactor is Mg(2+).

Its subcellular location is the membrane. It catalyses the reaction a 1,2-diacyl-sn-glycerol + UDP-alpha-D-glucose = a 1,2-diacyl-3-O-(beta-D-glucopyranosyl)-sn-glycerol + UDP + H(+). Functionally, glucosyltransferase involved in the biosynthesis of the non-bilayer-forming membrane lipid beta-monoglucosyldiacylglycerol which contributes to regulate the properties and stability of the membrane. Catalyzes the transfer of a glucosyl residue from UDP-Glc to diacylglycerol (DAG) acceptor to form the corresponding beta-glucosyl-DAG (1,2-diacyl-3-O-(beta-D-glucopyranosyl)-sn-glycerol). It can only use UDP-Glc as sugar donor. The sequence is that of Beta-monoglucosyldiacylglycerol synthase from Trichormus variabilis (strain ATCC 29413 / PCC 7937) (Anabaena variabilis).